A 427-amino-acid polypeptide reads, in one-letter code: Trigger factor (427 aa).

One can recognise a PPIase FKBP-type domain in the interval 163 to 248 (GDTVVIDFVG…IHEVKAKEVP (86 aa)).

This sequence belongs to the FKBP-type PPIase family. Tig subfamily.

Its subcellular location is the cytoplasm. It catalyses the reaction [protein]-peptidylproline (omega=180) = [protein]-peptidylproline (omega=0). Involved in protein export. Acts as a chaperone by maintaining the newly synthesized protein in an open conformation. Functions as a peptidyl-prolyl cis-trans isomerase. This Streptococcus pneumoniae (strain CGSP14) protein is Trigger factor.